A 67-amino-acid chain; its full sequence is Conotoxin mr3d (67 aa).

Positions 1–19 are cleaved as a signal peptide; the sequence is MSKLGILLTICLLLFPLTA. The propeptide occupies 20-52; sequence VPLDGDQPADRPAERMQDDISSEHHPFFDPVKR. 3 cysteine pairs are disulfide-bonded: Cys-53–Cys-65, Cys-54–Cys-62, and Cys-58–Cys-66. Pro-64 carries the post-translational modification 4-hydroxyproline; partial. Cys-66 bears the Cysteine amide; partial mark.

This sequence belongs to the conotoxin M superfamily. Post-translationally, has been found to be hydroxylated and amidated by Han et al. (2006), and to be unmodified by Ju et al. (2022). As to expression, expressed by the venom duct.

It localises to the secreted. In Conus marmoreus (Marble cone), this protein is Conotoxin mr3d.